A 319-amino-acid chain; its full sequence is MKLSRISAINWNKIQDDKDLEVWNRLTSNFWLPEKVPLSNDIPAWQTLSAAEQQLTIRVFTGLTLLDTIQNIAGAPSLMADAITPHEEAVLSNISFMEAVHARSYSSIFSTLCQTKEVDAAYAWSEENPPLQRKAQIILAHYVSDEPLKKKIASVFLESFLFYSGFWLPMYFSSRGKLTNTADLIRLIIRDEAVHGYYIGYKYQIALQKLSAIEREELKLFALDLLMELYDNEIRYTEALYAETGWVNDVKAFLCYNANKALMNLGYEALFPPEMADVNPAILAALSPNADENHDFFSGSGSSYVMGKTVETEDEDWNF.

Fe cation is bound by residues Asp-67, Glu-98, and His-101. The active site involves Tyr-105. Residues Glu-158, Glu-192, and His-195 each contribute to the Fe cation site.

Belongs to the ribonucleoside diphosphate reductase small chain family. As to quaternary structure, tetramer of two alpha and two beta subunits. The cofactor is Fe cation.

It catalyses the reaction a 2'-deoxyribonucleoside 5'-diphosphate + [thioredoxin]-disulfide + H2O = a ribonucleoside 5'-diphosphate + [thioredoxin]-dithiol. In terms of biological role, provides the precursors necessary for DNA synthesis. Catalyzes the biosynthesis of deoxyribonucleotides from the corresponding ribonucleotides. R2F contains the tyrosyl radical required for catalysis. This Salmonella typhimurium (strain LT2 / SGSC1412 / ATCC 700720) protein is Ribonucleoside-diphosphate reductase 2 subunit beta (nrdF).